A 229-amino-acid polypeptide reads, in one-letter code: Synaptogyrin-3 (229 aa).

Residue Met1 is modified to N-acetylmethionine. In terms of domain architecture, MARVEL spans 20 to 172 (FARRPQTLLR…LTVKALQRFR (153 aa)). The next 4 membrane-spanning stretches (helical) occupy residues 30-50 (VVSW…GYVN), 70-90 (FGVV…LLDV), 105-125 (VLLD…GFCF), and 148-168 (AAIA…VKAL). Positions 209–223 (QSPPFTETLDTSSKG) are enriched in polar residues. Residues 209-229 (QSPPFTETLDTSSKGYQVPAY) are disordered.

Belongs to the synaptogyrin family. In terms of assembly, interacts (via N-terminus) with SLC6A3 (via N-terminus). May interact with VMAT2. As to expression, specifically expressed in brain. Found in the brain across the dorsal and ventral corpus striatum as well as in the cortex.

The protein localises to the cytoplasmic vesicle. It localises to the secretory vesicle. It is found in the synaptic vesicle membrane. The protein resides in the synapse. Functionally, may play a role in regulated exocytosis. May indirectly regulate the activity of the plasma membrane dopamine transporter SLC6A3 and thereby regulate dopamine transport back from the synaptic cleft into the presynaptic terminal. In Mus musculus (Mouse), this protein is Synaptogyrin-3.